The chain runs to 283 residues: Elongation factor Ts (283 aa).

Residues 80–83 (TDFV) form an involved in Mg(2+) ion dislocation from EF-Tu region.

Belongs to the EF-Ts family.

It localises to the cytoplasm. Functionally, associates with the EF-Tu.GDP complex and induces the exchange of GDP to GTP. It remains bound to the aminoacyl-tRNA.EF-Tu.GTP complex up to the GTP hydrolysis stage on the ribosome. The polypeptide is Elongation factor Ts (Haemophilus ducreyi (strain 35000HP / ATCC 700724)).